The sequence spans 330 residues: tRNA U34 carboxymethyltransferase (330 aa).

Residues Lys91, Trp105, Lys110, Gly130, 152–154 (DPS), 181–182 (IE), Met196, Tyr200, and Arg315 contribute to the carboxy-S-adenosyl-L-methionine site.

This sequence belongs to the class I-like SAM-binding methyltransferase superfamily. CmoB family. In terms of assembly, homotetramer.

It catalyses the reaction carboxy-S-adenosyl-L-methionine + 5-hydroxyuridine(34) in tRNA = 5-carboxymethoxyuridine(34) in tRNA + S-adenosyl-L-homocysteine + H(+). In terms of biological role, catalyzes carboxymethyl transfer from carboxy-S-adenosyl-L-methionine (Cx-SAM) to 5-hydroxyuridine (ho5U) to form 5-carboxymethoxyuridine (cmo5U) at position 34 in tRNAs. In Shewanella denitrificans (strain OS217 / ATCC BAA-1090 / DSM 15013), this protein is tRNA U34 carboxymethyltransferase.